The primary structure comprises 476 residues: Protein transport protein Sec61 subunit alpha (476 aa).

Residues 2 to 33 lie on the Cytoplasmic side of the membrane; the sequence is GIKFLEFIKPFCAVLPEIQKPERKIQFREKVL. A helical membrane pass occupies residues 34 to 53; the sequence is WTAITLFIFLVCCQIPLFGI. At 54–76 the chain is on the lumenal side; that stretch reads MSSDSADPFYWMRVILASNRGTL. The chain crosses the membrane as a helical span at residues 77 to 96; the sequence is MELGIAPIVTSGLIMQLLAG. Residues 97–117 lie on the Cytoplasmic side of the membrane; it reads AKIIEVGDTPKDRALFNGAQK. The chain crosses the membrane as a helical span at residues 118 to 138; that stretch reads LFGMIITIGQAIVYVMTGMYG. Residues 139–144 are Lumenal-facing; that stretch reads DPSEMG. The chain crosses the membrane as a helical span at residues 145–165; sequence AGICLLIIIQLFVAGLIVLLL. The Cytoplasmic portion of the chain corresponds to 166-172; the sequence is DELLQKG. A helical membrane pass occupies residues 173–193; sequence YGLGSGISLFIATNICETIVW. Residues 194–240 are Lumenal-facing; that stretch reads KAFGPTTVNTGRGTEFEGAIIALFHLLATRTDKVRALREAFYRQNLP. Residues 241-261 form a helical membrane-spanning segment; the sequence is NLMNLIATVFVFAVVIYFQGF. Over 262–288 the chain is Cytoplasmic; the sequence is RVDLPIKSARYRGQYNTYPIKLFYTSN. Residues 289–309 traverse the membrane as a helical segment; the sequence is IPIILQSALVSNLYVISQMLS. The Lumenal segment spans residues 310 to 354; the sequence is TRFSGNFLVNLLGTWSDATTSGPARAYPVAGLCYYLSPPESFGSV. A helical membrane pass occupies residues 355 to 375; it reads LDDPVHAVIYIVFMLGSCAFF. Residues 376-420 are Cytoplasmic-facing; it reads SKTWIEVSGSSAKDVAKQLKEQQMVMRGHRETSMVHELNRYIPTA. A helical transmembrane segment spans residues 421–441; the sequence is AAFGGLCIGGLSVMADFLGAI. The Lumenal segment spans residues 442–445; that stretch reads GSGT. The chain crosses the membrane as a helical span at residues 446-462; it reads GILLAVTIIYQYFEIFV. Residues 463–476 lie on the Cytoplasmic side of the membrane; sequence KEQSEVGSMGALLF.

This sequence belongs to the SecY/SEC61-alpha family. In terms of assembly, the SEC61 channel-forming translocon complex consists of channel-forming core components SEC61A1, SEC61B and SEC61G and different auxiliary components such as SEC62 and SEC63. The SEC61 channel associates with the multi-pass translocon (MPT) complex.

The protein localises to the endoplasmic reticulum membrane. Functionally, component of SEC61 channel-forming translocon complex that mediates transport of signal peptide-containing precursor polypeptides across the endoplasmic reticulum (ER). Forms a ribosome receptor and a gated pore in the ER membrane, both functions required for cotranslational translocation of nascent polypeptides. May cooperate with auxiliary protein SEC62, SEC63 and HSPA5/BiP to enable post-translational transport of small presecretory proteins. The SEC61 channel is also involved in ER membrane insertion of transmembrane proteins: it mediates membrane insertion of the first few transmembrane segments of proteins, while insertion of subsequent transmembrane regions of multi-pass membrane proteins is mediated by the multi-pass translocon (MPT) complex. The protein is Protein transport protein Sec61 subunit alpha (sec61a) of Bovichtus variegatus (Thornfish).